A 351-amino-acid chain; its full sequence is MKKQYLKSGSGTRKEKDKAKRWFLDNGSIFLRELVADCNGKSIPIRSFSPEQILKATNNFDSSCFVSQDVYYKWYRGEIEDRSYMIKRFSEDEITGKRHRVKEVYNDIVLSARMSNHSNFLQLLGCCLEFPFPVLVFEFAEHGAMNQRGGVIVNGEESLLPWSVRLKIGKEIANAVTYLHTAFPKIIIHRDVKPMHVFLDKNWTAKLSDLSFSISLPEGKSRIEAEWVLGTFGYIDPLYHKTCFVTEYTDVYSFGICLLVIITGKPAIMTISDGDLQGILSLVRELCENGKLDEVIDPRLMKDITSGQRLQVEACVVLALRCCKERDEDRPKMIQVAKELKQIEASLKNSS.

The Protein kinase domain occupies F60 to L347. Residues V66–W74 and K87 each bind ATP. D191 (proton acceptor) is an active-site residue.

The protein belongs to the protein kinase superfamily. Ser/Thr protein kinase family. ZRK subfamily. In terms of assembly, component of a stable high-order oligomeric complex made of RKS1 and RPP13L4/ZAR1 which recruits Xanthomonas campestris effector XopAC/AvrAC-mediated uridylylated PBL2 in the presence of ATP to form a wheel-like pentameric resistosome; this complex triggers immunity toward X.campestris in vascular tissues. Interacts with RPP13L4/ZAR1 and uridylylated PBL2. In terms of tissue distribution, expressed at high levels in germinating seeds and at lower levels in adult leaves.

It carries out the reaction L-seryl-[protein] + ATP = O-phospho-L-seryl-[protein] + ADP + H(+). The enzyme catalyses L-threonyl-[protein] + ATP = O-phospho-L-threonyl-[protein] + ADP + H(+). Its function is as follows. Serine/threonine-protein kinase that confers a broad-spectrum quantitative disease resistance (QDR) to the pathogenic biotrophic bacteria Xanthomonas campestris (e.g. pv. campestris (Xcc), pv. raphani, pv. armoriaceae and pv. incanae) by restricting bacterial spread to the vascular system from the infection site; X.campestris causes black rot disease in crops. Seems to not have any kinase activity. The chain is Serine/threonine-protein kinase ZRK1 from Arabidopsis thaliana (Mouse-ear cress).